Consider the following 107-residue polypeptide: Iron-binding protein IscA (107 aa).

Fe cation contacts are provided by Cys-35, Cys-99, and Cys-101.

It belongs to the HesB/IscA family. In terms of assembly, homodimer; may form tetramers and higher multimers. Fe cation is required as a cofactor.

Is able to transfer iron-sulfur clusters to apo-ferredoxin. Multiple cycles of [2Fe2S] cluster formation and transfer are observed, suggesting that IscA acts catalytically. Recruits intracellular free iron so as to provide iron for the assembly of transient iron-sulfur cluster in IscU in the presence of IscS, L-cysteine and the thioredoxin reductase system TrxA/TrxB. The chain is Iron-binding protein IscA from Salmonella agona (strain SL483).